The following is a 318-amino-acid chain: Pantothenate kinase (318 aa).

96 to 103 (GSVAVGKS) contributes to the ATP binding site.

It belongs to the prokaryotic pantothenate kinase family.

The protein resides in the cytoplasm. The catalysed reaction is (R)-pantothenate + ATP = (R)-4'-phosphopantothenate + ADP + H(+). It functions in the pathway cofactor biosynthesis; coenzyme A biosynthesis; CoA from (R)-pantothenate: step 1/5. This Coxiella burnetii (strain CbuK_Q154) (Coxiella burnetii (strain Q154)) protein is Pantothenate kinase.